Reading from the N-terminus, the 160-residue chain is Cytochrome b6-f complex subunit 4 (160 aa).

The next 3 membrane-spanning stretches (helical) occupy residues 36-56 (LLYI…GLSV), 95-115 (LLGV…PFIE), and 131-151 (TLFL…TLPI).

It belongs to the cytochrome b family. PetD subfamily. The 4 large subunits of the cytochrome b6-f complex are cytochrome b6, subunit IV (17 kDa polypeptide, petD), cytochrome f and the Rieske protein, while the 4 small subunits are petG, petL, petM and petN. The complex functions as a dimer.

The protein localises to the plastid. The protein resides in the chloroplast thylakoid membrane. In terms of biological role, component of the cytochrome b6-f complex, which mediates electron transfer between photosystem II (PSII) and photosystem I (PSI), cyclic electron flow around PSI, and state transitions. The polypeptide is Cytochrome b6-f complex subunit 4 (Tetradesmus obliquus (Green alga)).